A 297-amino-acid polypeptide reads, in one-letter code: MRPALSDYRHLASGKVRELYRIDDEHLLFVATDRISAYDHILSSEIPDKGRILTAMSVFFFDLIDAPNHLAGPPDDPRIPEEVLGRALVVRQLEMLPVECVARGYLTGSGLIDYRKTGTLCGLTLPPGLTEASKFAEPLYTPASKAELGLHDENIDFAATVDLVGEKRAAQLRERTLQIYTQGADHALTKGIIIADTKFEFGVDQSGELVLADEVFTPDSSRYWYADAYREGQVQPSYDKQFVRNWLTGPESGWDRAADQPPPPLPAEIVDATRSRYIEAYERISGLSFAEWIGASA.

This sequence belongs to the SAICAR synthetase family.

The enzyme catalyses 5-amino-1-(5-phospho-D-ribosyl)imidazole-4-carboxylate + L-aspartate + ATP = (2S)-2-[5-amino-1-(5-phospho-beta-D-ribosyl)imidazole-4-carboxamido]succinate + ADP + phosphate + 2 H(+). It participates in purine metabolism; IMP biosynthesis via de novo pathway; 5-amino-1-(5-phospho-D-ribosyl)imidazole-4-carboxamide from 5-amino-1-(5-phospho-D-ribosyl)imidazole-4-carboxylate: step 1/2. The sequence is that of Phosphoribosylaminoimidazole-succinocarboxamide synthase from Mycobacterium sp. (strain JLS).